The sequence spans 380 residues: MRYSLFLEFFFVFVLTCSLDVICYKRTSSLNLVTDIKQIKNKSIHKRNRLYSSNENLKRLKYIREVTNASIQVCNDALKECNNDVDKAIELVRKNTKNGSFISTSVKTQKEGLICSDIMDDKIVLIELLTDSDFVARNNKFVTFLKNISKLCLHNEIIPPNIDVNDSVENFDTSLVAIDKIMQSPYTNSNGEINGTVSEELNYLRNIFREDIKIGRFSKYIKKNENEFLHYYIHNIVDGNNVGLSGVMLVIEIDNLNEKLKTKEKDIISFANDLCMHIISAKPVSVSIDKVNQNVVKKEMDIIRDSLKDLNKPENIITNMINGKMKKFYSNVVLLEQEYMLDDTKRKVSQVIKDFSKNNDLTINVKHFDNFIVGEKNILV.

This sequence belongs to the EF-Ts family.

It is found in the mitochondrion. Its function is as follows. Associates with the EF-Tu.GDP complex and induces the exchange of GDP to GTP. It remains bound to the aminoacyl-tRNA.EF-Tu.GTP complex up to the GTP hydrolysis stage on the ribosome. The sequence is that of Elongation factor Ts, mitochondrial from Plasmodium chabaudi chabaudi.